Reading from the N-terminus, the 232-residue chain is Phosphatidylserine decarboxylase proenzyme (232 aa).

Serine 190 acts as the Schiff-base intermediate with substrate; via pyruvic acid in catalysis. A Pyruvic acid (Ser); by autocatalysis modification is found at serine 190.

It belongs to the phosphatidylserine decarboxylase family. PSD-A subfamily. In terms of assembly, heterodimer of a large membrane-associated beta subunit and a small pyruvoyl-containing alpha subunit. Requires pyruvate as cofactor. In terms of processing, is synthesized initially as an inactive proenzyme. Formation of the active enzyme involves a self-maturation process in which the active site pyruvoyl group is generated from an internal serine residue via an autocatalytic post-translational modification. Two non-identical subunits are generated from the proenzyme in this reaction, and the pyruvate is formed at the N-terminus of the alpha chain, which is derived from the carboxyl end of the proenzyme. The post-translation cleavage follows an unusual pathway, termed non-hydrolytic serinolysis, in which the side chain hydroxyl group of the serine supplies its oxygen atom to form the C-terminus of the beta chain, while the remainder of the serine residue undergoes an oxidative deamination to produce ammonia and the pyruvoyl prosthetic group on the alpha chain.

The protein resides in the cell membrane. The enzyme catalyses a 1,2-diacyl-sn-glycero-3-phospho-L-serine + H(+) = a 1,2-diacyl-sn-glycero-3-phosphoethanolamine + CO2. The protein operates within phospholipid metabolism; phosphatidylethanolamine biosynthesis; phosphatidylethanolamine from CDP-diacylglycerol: step 2/2. Its function is as follows. Catalyzes the formation of phosphatidylethanolamine (PtdEtn) from phosphatidylserine (PtdSer). This is Phosphatidylserine decarboxylase proenzyme from Rhizobium etli (strain CIAT 652).